The primary structure comprises 554 residues: 3-(3-hydroxy-phenyl)propionate/3-hydroxycinnamic acid hydroxylase (554 aa).

Residues 17–46 (QVAI…VVEK) and 285–295 (FRIDRVLLAGD) each bind FAD.

Belongs to the PheA/TfdB FAD monooxygenase family. FAD is required as a cofactor.

It carries out the reaction 3-(3-hydroxyphenyl)propanoate + NADH + O2 + H(+) = 3-(2,3-dihydroxyphenyl)propanoate + NAD(+) + H2O. The catalysed reaction is (2E)-3-(3-hydroxyphenyl)prop-2-enoate + NADH + O2 + H(+) = (2E)-3-(2,3-dihydroxyphenyl)prop-2-enoate + NAD(+) + H2O. Its pathway is aromatic compound metabolism; 3-phenylpropanoate degradation. Catalyzes the insertion of one atom of molecular oxygen into position 2 of the phenyl ring of 3-(3-hydroxyphenyl)propionate (3-HPP) and hydroxycinnamic acid (3HCI). The chain is 3-(3-hydroxy-phenyl)propionate/3-hydroxycinnamic acid hydroxylase from Escherichia coli O81 (strain ED1a).